Consider the following 710-residue polypeptide: Tubulin polyglutamylase TTLL11 (710 aa).

The interval 41–135 (VRVDAGAAGE…QRPVTVDSSK (95 aa)) is disordered. Residues 51–60 (PECKAGEEQP) show a composition bias toward basic and acidic residues. Low complexity predominate over residues 64-82 (APAPAQPSAAEEGNTQVLQ). Pro residues predominate over residues 83 to 93 (RPPPTLPPSKP). A compositionally biased stretch (polar residues) spans 123 to 135 (NGSQRPVTVDSSK). Residues 128–480 (PVTVDSSKAR…EVKVAVIRDT (353 aa)) form the TTL domain. Residues Lys-249, 255 to 256 (QG), 282 to 285 (QEYI), and 295 to 297 (KFD) contribute to the ATP site. A protein is bound at residue Gln-255. Arg-321 contacts L-glutamate. 343-344 (TN) contacts ATP. L-glutamate contacts are provided by Tyr-345, Ser-346, and Lys-365. Residues Asp-428, Glu-441, and Asn-443 each coordinate Mg(2+). The segment at 467-538 (LVDEEVKVAV…SICLKQVFPK (72 aa)) is c-MTBD region. Lys-473 serves as a coordination point for L-glutamate. The disordered stretch occupies residues 665–710 (GVPSGGRPPHRGPPQEPSPSAQPAGDNPPPRTSCANKLSHPRHTLS).

It belongs to the tubulin--tyrosine ligase family. It depends on Mg(2+) as a cofactor.

The protein resides in the cytoplasm. The protein localises to the cytoskeleton. Its subcellular location is the cilium basal body. It catalyses the reaction L-glutamyl-[protein] + L-glutamate + ATP = gamma-L-glutamyl-L-glutamyl-[protein] + ADP + phosphate + H(+). The catalysed reaction is (L-glutamyl)(n)-gamma-L-glutamyl-L-glutamyl-[protein] + L-glutamate + ATP = (L-glutamyl)(n+1)-gamma-L-glutamyl-L-glutamyl-[protein] + ADP + phosphate + H(+). Its function is as follows. Polyglutamylase which modifies tubulin, generating polyglutamate side chains of variable lengths on the gamma-carboxyl group of specific glutamate residues within the C-terminal tail of tubulin. Preferentially mediates ATP-dependent polyglutamate long side-chain elongation over the initiation step of the polyglutamylation reaction. Preferentially modifies the alpha-tubulin tail over a beta-tail. Required for CCSAP localization to both spindle and cilia microtubules. Promotes tubulin polyglutamylation which stimulates spastin/SPAST-mediated microtubule severing, thereby regulating microtubule functions. In Homo sapiens (Human), this protein is Tubulin polyglutamylase TTLL11.